The chain runs to 358 residues: DNA-directed RNA polymerase subunit alpha (358 aa).

Residues 1-244 form an alpha N-terminal domain (alpha-NTD) region; that stretch reads MENKLFSCIE…NLFLSIYDTS (244 aa). Residues 287–358 form an alpha C-terminal domain (alpha-CTD) region; the sequence is YKTSFDKNLT…KMVKYGTVNK (72 aa).

Belongs to the RNA polymerase alpha chain family. As to quaternary structure, homodimer. The RNAP catalytic core consists of 2 alpha, 1 beta, 1 beta' and 1 omega subunit. When a sigma factor is associated with the core the holoenzyme is formed, which can initiate transcription.

It localises to the plastid. It is found in the chloroplast. It carries out the reaction RNA(n) + a ribonucleoside 5'-triphosphate = RNA(n+1) + diphosphate. Functionally, DNA-dependent RNA polymerase catalyzes the transcription of DNA into RNA using the four ribonucleoside triphosphates as substrates. The polypeptide is DNA-directed RNA polymerase subunit alpha (rpoA) (Bigelowiella natans (Pedinomonas minutissima)).